A 235-amino-acid chain; its full sequence is Phosphoribosylaminoimidazole-succinocarboxamide synthase (235 aa).

It belongs to the SAICAR synthetase family.

It carries out the reaction 5-amino-1-(5-phospho-D-ribosyl)imidazole-4-carboxylate + L-aspartate + ATP = (2S)-2-[5-amino-1-(5-phospho-beta-D-ribosyl)imidazole-4-carboxamido]succinate + ADP + phosphate + 2 H(+). It participates in purine metabolism; IMP biosynthesis via de novo pathway; 5-amino-1-(5-phospho-D-ribosyl)imidazole-4-carboxamide from 5-amino-1-(5-phospho-D-ribosyl)imidazole-4-carboxylate: step 1/2. In Clostridium perfringens (strain 13 / Type A), this protein is Phosphoribosylaminoimidazole-succinocarboxamide synthase.